We begin with the raw amino-acid sequence, 130 residues long: Small ribosomal subunit protein uS9 (130 aa).

This sequence belongs to the universal ribosomal protein uS9 family.

This is Small ribosomal subunit protein uS9 from Serratia proteamaculans (strain 568).